The primary structure comprises 320 residues: Mitochondrial oxaloacetate transport protein (320 aa).

3 Solcar repeats span residues 21-114 (LGPV…IRRT), 126-218 (NKLA…AKRM), and 227-313 (EGMI…TNKL). 6 helical membrane-spanning segments follow: residues 26–47 (GFLS…FEVI), 91–111 (GTAY…YEPI), 129–145 (AINV…GALF), 197–217 (AILR…WAKR), 233–253 (LTAS…FDTV), and 285–306 (LYKG…CLTF).

Belongs to the mitochondrial carrier (TC 2.A.29) family.

The protein resides in the mitochondrion inner membrane. It catalyses the reaction a dicarboxylate(in) + sulfate(out) = a dicarboxylate(out) + sulfate(in). The catalysed reaction is (2S)-2-isopropylmalate(in) + sulfate(out) = (2S)-2-isopropylmalate(out) + sulfate(in). The enzyme catalyses (2R,3S)-3-isopropylmalate(in) + sulfate(out) = (2R,3S)-3-isopropylmalate(out) + sulfate(in). It carries out the reaction malonate(in) + sulfate(out) = malonate(out) + sulfate(in). It catalyses the reaction oxaloacetate(in) + sulfate(out) = oxaloacetate(out) + sulfate(in). The catalysed reaction is thiosulfate(in) + sulfate(out) = thiosulfate(out) + sulfate(in). Its function is as follows. Antiporter that exchanges dicarboxylates and sulfur oxoanions across the inner membrane of mitochondria. Exports alpha-isopropylmalate from mitochondrial matrix to the cytosol, where it serves as a precursor for leucine biosynthesis. This Schizosaccharomyces pombe (strain 972 / ATCC 24843) (Fission yeast) protein is Mitochondrial oxaloacetate transport protein (oac1).